Here is a 396-residue protein sequence, read N- to C-terminus: Phosphoglycerate kinase (396 aa).

Substrate contacts are provided by residues 21–23 (DFN), R36, 59–62 (HLGR), R119, and R156. ATP is bound by residues K207, E325, and 352–355 (GGDS).

This sequence belongs to the phosphoglycerate kinase family. As to quaternary structure, monomer.

The protein resides in the cytoplasm. The enzyme catalyses (2R)-3-phosphoglycerate + ATP = (2R)-3-phospho-glyceroyl phosphate + ADP. It participates in carbohydrate degradation; glycolysis; pyruvate from D-glyceraldehyde 3-phosphate: step 2/5. The chain is Phosphoglycerate kinase from Lacticaseibacillus casei (strain BL23) (Lactobacillus casei).